A 71-amino-acid polypeptide reads, in one-letter code: UPF0435 protein SE_1565 (71 aa).

The protein belongs to the UPF0435 family.

The chain is UPF0435 protein SE_1565 from Staphylococcus epidermidis (strain ATCC 12228 / FDA PCI 1200).